Reading from the N-terminus, the 281-residue chain is tRNA uridine(34) hydroxylase (281 aa).

Residues 121-214 form the Rhodanese domain; that stretch reads SQPDVLVIDT…YLEKTHNKSG (94 aa). Catalysis depends on Cys174, which acts as the Cysteine persulfide intermediate.

It belongs to the TrhO family.

It catalyses the reaction uridine(34) in tRNA + AH2 + O2 = 5-hydroxyuridine(34) in tRNA + A + H2O. Catalyzes oxygen-dependent 5-hydroxyuridine (ho5U) modification at position 34 in tRNAs. The protein is tRNA uridine(34) hydroxylase of Wolbachia pipientis subsp. Culex pipiens (strain wPip).